A 223-amino-acid chain; its full sequence is Killer cell lectin-like receptor subfamily B member 1B allele B (223 aa).

Residues 1-43 lie on the Cytoplasmic side of the membrane; sequence MDSTTLVYADLNLARIQEPKHDSPPSLSPDTCRCPRWHRLALK. An ITIM motif motif is present at residues 6–11; sequence LVYADL. The LCK-binding motif motif lies at 32–35; the sequence is CRCP. A helical; Signal-anchor for type II membrane protein membrane pass occupies residues 44 to 64; sequence FGCAGLILLVLVVIGLCVLVL. Residues 65–223 are Extracellular-facing; the sequence is SVQKSSVQKI…LNHETPCNDS (159 aa). Positions 101–211 constitute a C-type lectin domain; that stretch reads HRDKCFHVSQ…CSSDNRWICQ (111 aa). 2 disulfide bridges follow: Cys122–Cys210 and Cys189–Cys202.

In terms of assembly, homodimer; disulfide-linked. Interacts with tyrosine kinase LCK. Binds PTPN6/SHP-1 in a phosphorylation-dependent manner. As to expression, expressed in NK cells and a subset of T-cells.

The protein localises to the membrane. In terms of biological role, receptor for CLEC2D/OCIL. Ligand-binding contributes to inhibition of cytotoxic natural killer (NK) cells. May mediate MHC class I-independent 'missing-self' recognition of allografts, tumor cells and virus-infected cells. In Mus musculus (Mouse), this protein is Killer cell lectin-like receptor subfamily B member 1B allele B (Klrb1b).